The primary structure comprises 79 residues: Small ribosomal subunit protein bS16 (79 aa).

The protein belongs to the bacterial ribosomal protein bS16 family.

The chain is Small ribosomal subunit protein bS16 from Desulfovibrio desulfuricans (strain ATCC 27774 / DSM 6949 / MB).